The following is a 305-amino-acid chain: tRNA pseudouridine synthase B (305 aa).

Aspartate 39 serves as the catalytic Nucleophile. Residues 237 to 305 (LPVIIVPGEF…FLLKPHKVLK (69 aa)) enclose the PUA domain.

Belongs to the pseudouridine synthase TruB family. Type 1 subfamily.

The enzyme catalyses uridine(55) in tRNA = pseudouridine(55) in tRNA. Functionally, responsible for synthesis of pseudouridine from uracil-55 in the psi GC loop of transfer RNAs. The polypeptide is tRNA pseudouridine synthase B (Moorella thermoacetica (strain ATCC 39073 / JCM 9320)).